We begin with the raw amino-acid sequence, 342 residues long: MKMEEFSPPTSPNNHVIVQANPQIAAALSTNSPMQQGIPPQGHQNPNEQQQQQQFVGQPPMGGMGGPMRMQMPQQQIRQMPYPSPQMRAGPPPPQQQQQQHFQQMGIPQQQQPQQFTPNGQSMQMQQRPMQMGMAQGPGPSGHLMGMVGGPPPQHMMQQQGGGGPPQFVPNSSPMPLPPQQIMQVQHQQQHQQPPPSQQIQQPPIPQPQQQQAPPPQMIPAAVPYGSIMEKSKLDDLMQQISSTTVLEENVKDVLVEYADDFVSSLIDKACKMIKNREVKKIESRDIEFILKNVYNMPVVPRAASHNFGSQTEVIDLSKEKFVPTEAHKQRVALLKKQIKKL.

Positions 1-221 are disordered; it reads MKMEEFSPPT…QAPPPQMIPA (221 aa). The segment covering 12–35 has biased composition (polar residues); it reads PNNHVIVQANPQIAAALSTNSPMQ. 4 stretches are compositionally biased toward low complexity: residues 39-59, 67-89, 96-146, and 180-192; these read PPQG…VGQP, PMRM…QMRA, QQQQ…HLMG, and QQIM…QQHQ. The span at 193-218 shows a compositional bias: pro residues; the sequence is QPPPSQQIQQPPIPQPQQQQAPPPQM. One can recognise a Histone-fold domain in the interval 230–297; the sequence is EKSKLDDLMQ…EFILKNVYNM (68 aa).

It belongs to the TAF12 family. As to quaternary structure, interacts (via histone-fold domain) with taf-4 (via the histone-fold domain). Interaction may facilitate the nuclear localization of taf-4.

The protein localises to the nucleus. Its function is as follows. Part of the general transcription factor complex TFIID. Plays a role in recruiting taf-4 to the nucleus and thereby activating transcription initiation by RNA polymerase II, as part of the TFIID complex. This is Transcription initiation factor TFIID subunit 12 from Caenorhabditis elegans.